A 579-amino-acid polypeptide reads, in one-letter code: Type II methyltransferase M.BseCI (579 aa).

This sequence belongs to the N(4)/N(6)-methyltransferase family.

It catalyses the reaction a 2'-deoxyadenosine in DNA + S-adenosyl-L-methionine = an N(6)-methyl-2'-deoxyadenosine in DNA + S-adenosyl-L-homocysteine + H(+). A gamma subtype methylase, recognizes the double-stranded sequence 5'-ATCGAT-3', methylation on A-5 on both strands, and protects the DNA from cleavage by the BanIII endonuclease. In Geobacillus stearothermophilus (Bacillus stearothermophilus), this protein is Type II methyltransferase M.BseCI.